A 608-amino-acid polypeptide reads, in one-letter code: MHYMKWIYPRRLRNQMILMAILMVIVPTLTIGYIVETEGRSAVLSEKEKKLSAVVNLLNQALGDRYDLYIDLPREERIRALNAELAPITENITHAFPGIGAGYYNKMLDAIITYAPSALYQNNVGVTIAADHPGREVMRTNTPLVYSGRQVRGDILNSMLPIERNGEILGYIWANELTEDIRRQAWKMDVRIIIVLTAGLLISLLLIVLFSRRLSANIDIITDGLSTLAQNIPTRLPQLPGEMGQISQSVNNLAQALRETRTLNDLIIENAADGVIAIDRQGDVTTMNPAAEVITGYQRHELVGQPYSMLFDNTQFYSPVLDTLEHGTEHVALEISFPGRDRTIELSVTTSRIHNTHGEMIGALVIFSDLTARKETQRRMAQAERLATLGELMAGVAHEVRNPLTAIRGYVQILRQQTSDPIHQEYLSVVLKEIDSINKVIQQLLEFSRPRHSQWQQVSLNALVEETLVLVQTAGVQARVDFISELDNELSPINADRELLKQVLLNILINAVQAISARGKIRIQTWQYSDSQQAISIEDNGCGIDLSLQKKIFDPFFTTKASGTGLGLALSQRIINAHQGDIRVASLPGYGATFTLILPINPQGNQTV.

Residues methionine 1–glutamine 15 lie on the Cytoplasmic side of the membrane. The helical transmembrane segment at methionine 16–glutamate 36 threads the bilayer. Residues threonine 37–aspartate 189 are Periplasmic-facing. Residues valine 190–phenylalanine 210 form a helical membrane-spanning segment. The Cytoplasmic segment spans residues serine 211–valine 608. Residues arginine 212–threonine 262 enclose the HAMP domain. In terms of domain architecture, PAS spans threonine 260–glutamine 305. The region spanning histidine 326–glutamine 382 is the PAC domain. One can recognise a Histidine kinase domain in the interval glycine 395 to proline 602. Histidine 398 carries the phosphohistidine; by autocatalysis modification.

Homodimer. Autophosphorylated. Each AtoS molecule may phosphorylate its partner within the dimer rather than phosphorylating itself.

It is found in the cell inner membrane. The enzyme catalyses ATP + protein L-histidine = ADP + protein N-phospho-L-histidine.. Functionally, member of the two-component regulatory system AtoS/AtoC. In the presence of acetoacetate, AtoS/AtoC stimulates the expression of the atoDAEB operon, leading to short chain fatty acid catabolism and activation of the poly-(R)-3-hydroxybutyrate (cPHB) biosynthetic pathway. Also induces the operon in response to spermidine. Involved in the regulation of motility and chemotaxis, via transcriptional induction of the flagellar regulon. AtoS is a membrane-associated kinase that phosphorylates and activates AtoC in response to environmental signals. This Escherichia coli (strain K12) protein is Signal transduction histidine-protein kinase AtoS (atoS).